We begin with the raw amino-acid sequence, 768 residues long: Probable LRR receptor-like serine/threonine-protein kinase At4g37250 (768 aa).

The first 21 residues, Met1–Ala21, serve as a signal peptide directing secretion. The Extracellular segment spans residues Leu22–Gly328. An N-linked (GlcNAc...) asparagine glycan is attached at Asn64. 8 LRR repeats span residues Lys67 to Leu90, Thr91 to Asn112, Glu115 to Leu137, Asn139 to Arg162, Asn163 to Arg183, Val184 to Tyr206, Ser207 to Asn229, and Arg232 to Leu254. Asn99 carries an N-linked (GlcNAc...) asparagine glycan. Asn144, Asn163, Asn196, Asn212, Asn233, and Asn242 each carry an N-linked (GlcNAc...) asparagine glycan. Residues Pro301 to Gly324 are disordered. Residues Thr303–Asn320 are compositionally biased toward polar residues. A helical membrane pass occupies residues Val329–Leu349. Residues Tyr350 to His768 lie on the Cytoplasmic side of the membrane. The tract at residues Asp361 to Lys432 is disordered. Residues Ser378–Pro387 are compositionally biased toward low complexity. Acidic residues predominate over residues Pro407–Ser420. The Protein kinase domain occupies Lys449–Ser756. Phosphoserine is present on residues Ser451 and Ser531. Thr553 carries the post-translational modification Phosphothreonine. At Ser662 the chain carries Phosphoserine.

The protein belongs to the protein kinase superfamily. Ser/Thr protein kinase family.

It localises to the membrane. It carries out the reaction L-seryl-[protein] + ATP = O-phospho-L-seryl-[protein] + ADP + H(+). The enzyme catalyses L-threonyl-[protein] + ATP = O-phospho-L-threonyl-[protein] + ADP + H(+). This Arabidopsis thaliana (Mouse-ear cress) protein is Probable LRR receptor-like serine/threonine-protein kinase At4g37250.